Reading from the N-terminus, the 109-residue chain is Parvalbumin, thymic (109 aa).

Alanine 2 is modified (N-acetylalanine). EF-hand domains are found at residues 39-74 and 78-109; these read KTPD…FSSS and LTSA…LVKA. Positions 52, 54, 56, 63, 91, 93, 95, 97, and 102 each coordinate Ca(2+).

This sequence belongs to the parvalbumin family.

Its function is as follows. Appears to promote immune maturation in bone marrow cells in culture. Binds two calcium ions. The protein is Parvalbumin, thymic of Gallus gallus (Chicken).